Consider the following 200-residue polypeptide: Cytochrome c biogenesis ATP-binding export protein CcmA (200 aa).

The region spanning 1-199 is the ABC transporter domain; that stretch reads MRLTGRGLRC…AARELRIGGA (199 aa). An ATP-binding site is contributed by 35–42; the sequence is GANGAGKT.

Belongs to the ABC transporter superfamily. CcmA exporter (TC 3.A.1.107) family. In terms of assembly, the complex is composed of two ATP-binding proteins (CcmA) and two transmembrane proteins (CcmB).

It is found in the cell inner membrane. It carries out the reaction heme b(in) + ATP + H2O = heme b(out) + ADP + phosphate + H(+). Part of the ABC transporter complex CcmAB involved in the biogenesis of c-type cytochromes; once thought to export heme, this seems not to be the case, but its exact role is uncertain. Responsible for energy coupling to the transport system. The polypeptide is Cytochrome c biogenesis ATP-binding export protein CcmA (Rhodopseudomonas palustris (strain BisB18)).